The chain runs to 479 residues: Ribosomal RNA small subunit methyltransferase F (479 aa).

Residues 125 to 131, glutamate 149, aspartate 176, and aspartate 194 each bind S-adenosyl-L-methionine; that span reads AAAPGSK. Cysteine 247 acts as the Nucleophile in catalysis.

This sequence belongs to the class I-like SAM-binding methyltransferase superfamily. RsmB/NOP family.

The protein resides in the cytoplasm. It carries out the reaction cytidine(1407) in 16S rRNA + S-adenosyl-L-methionine = 5-methylcytidine(1407) in 16S rRNA + S-adenosyl-L-homocysteine + H(+). Functionally, specifically methylates the cytosine at position 1407 (m5C1407) of 16S rRNA. This Escherichia coli O6:H1 (strain CFT073 / ATCC 700928 / UPEC) protein is Ribosomal RNA small subunit methyltransferase F.